The sequence spans 446 residues: Glutamyl-tRNA reductase (446 aa).

Residues 49-52, serine 109, 114-116, and glutamine 120 each bind substrate; these read TCNR and ETQ. The active-site Nucleophile is cysteine 50. 189 to 194 is an NADP(+) binding site; the sequence is GAGETG.

It belongs to the glutamyl-tRNA reductase family. Homodimer.

It carries out the reaction (S)-4-amino-5-oxopentanoate + tRNA(Glu) + NADP(+) = L-glutamyl-tRNA(Glu) + NADPH + H(+). It participates in porphyrin-containing compound metabolism; protoporphyrin-IX biosynthesis; 5-aminolevulinate from L-glutamyl-tRNA(Glu): step 1/2. Its function is as follows. Catalyzes the NADPH-dependent reduction of glutamyl-tRNA(Glu) to glutamate 1-semialdehyde (GSA). This is Glutamyl-tRNA reductase from Exiguobacterium sibiricum (strain DSM 17290 / CCUG 55495 / CIP 109462 / JCM 13490 / 255-15).